Here is a 252-residue protein sequence, read N- to C-terminus: 2-succinyl-6-hydroxy-2,4-cyclohexadiene-1-carboxylate synthase (252 aa).

The protein belongs to the AB hydrolase superfamily. MenH family. Monomer.

The enzyme catalyses 5-enolpyruvoyl-6-hydroxy-2-succinyl-cyclohex-3-ene-1-carboxylate = (1R,6R)-6-hydroxy-2-succinyl-cyclohexa-2,4-diene-1-carboxylate + pyruvate. It functions in the pathway quinol/quinone metabolism; 1,4-dihydroxy-2-naphthoate biosynthesis; 1,4-dihydroxy-2-naphthoate from chorismate: step 3/7. It participates in quinol/quinone metabolism; menaquinone biosynthesis. Catalyzes a proton abstraction reaction that results in 2,5-elimination of pyruvate from 2-succinyl-5-enolpyruvyl-6-hydroxy-3-cyclohexene-1-carboxylate (SEPHCHC) and the formation of 2-succinyl-6-hydroxy-2,4-cyclohexadiene-1-carboxylate (SHCHC). The chain is 2-succinyl-6-hydroxy-2,4-cyclohexadiene-1-carboxylate synthase from Salmonella newport (strain SL254).